Consider the following 144-residue polypeptide: Putative pre-16S rRNA nuclease (144 aa).

It belongs to the YqgF nuclease family.

Its subcellular location is the cytoplasm. Could be a nuclease involved in processing of the 5'-end of pre-16S rRNA. In Chlorobium phaeobacteroides (strain BS1), this protein is Putative pre-16S rRNA nuclease.